The primary structure comprises 421 residues: MDLEAKVKKMGLGHEQGFGAPCLKCKEKCEGFELHFWRKICRNCKCGQEEHDVLLSNEEDRKVGKLFEDTKYTTLIAKLKSDGIPMYKRNVMILTNPVAAKKNVSINTVTYEWAPPVQNQALARQYMQMLPKEKQPVAGSEGAQYRKKQLAKQLPAHDQDPSKCHELSPKEVKEMEQFVKKYKSEALGVGDVKLPRDMNTQGPNKMYIPGGDRSTTTAVGAMEDKSAEHKRTQYSCYCCKLSMKEGDPAIYAERAGYDKLWHPACFVCSTCHELLVDMIYFWKNGKLYCGRHYCDSEKPRCAGCDELIFSNEYTQAENQNWHLKHFCCFDCDNILAGEIYVMVNDKPVCKPCYVKNHAVVCQGCHNAIDPEVQRVTYNNFSWHASTECFLCSCCSKCLIGQKFMPVEGMVFCSVECKKMMS.

In terms of domain architecture, PET spans 92–199 (MILTNPVAAK…GDVKLPRDMN (108 aa)). Disordered regions lie at residues 133–164 (EKQPVAGSEGAQYRKKQLAKQLPAHDQDPSKC) and 193–213 (KLPRDMNTQGPNKMYIPGGDR). Positions 155–164 (PAHDQDPSKC) are enriched in basic and acidic residues. LIM zinc-binding domains are found at residues 234 to 297 (YSCY…CDSE), 299 to 359 (PRCA…NHAV), and 362 to 421 (QGCH…KMMS).

The protein belongs to the prickle / espinas / testin family. As to quaternary structure, interacts via LIM domain 1 with ZYX. Interacts (via LIM domain 3) with ENAH and VASP. Interacts with ALKBH4, talin, actin, alpha-actinin, GRIP1 and PXN. Interacts (via LIM domain 2) with ACTL7A (via N-terminus). Heterodimer with ACTL7A; the heterodimer interacts with ENAH to form a heterotrimer.

It localises to the cytoplasm. The protein resides in the cell junction. The protein localises to the focal adhesion. In terms of biological role, scaffold protein that may play a role in cell adhesion, cell spreading and in the reorganization of the actin cytoskeleton. Plays a role in the regulation of cell proliferation. May act as a tumor suppressor. This Ovis aries (Sheep) protein is Testin (TES).